We begin with the raw amino-acid sequence, 178 residues long: Probable major fimbrial subunit LpfA (178 aa).

The signal sequence occupies residues Met1–Ala24.

It belongs to the fimbrial protein family.

It is found in the fimbrium. Its function is as follows. Part of the lpfABCC'DE fimbrial operon. LP fimbriae may participate in the interaction with eukaryotic cells by assisting in microcolony formation. The sequence is that of Probable major fimbrial subunit LpfA (lpfA) from Escherichia coli O157:H7.